The sequence spans 265 residues: Vegetative storage protein 2 (265 aa).

An N-terminal signal peptide occupies residues 1–18 (MKILSLSLLLLLAATVSA). Asparagine 110, asparagine 188, and asparagine 210 each carry an N-linked (GlcNAc...) asparagine glycan.

It belongs to the APS1/VSP family. In terms of tissue distribution, highly expressed in flowers, but also found in leaves, vegetative shoots, petioles, peduncles, and receptacles of floral organs.

Its function is as follows. May function as somatic storage protein during early seedling development. The protein is Vegetative storage protein 2 (VSP2) of Arabidopsis thaliana (Mouse-ear cress).